The sequence spans 806 residues: Phenylalanine--tRNA ligase beta subunit (806 aa).

The 116-residue stretch at 40 to 155 folds into the tRNA-binding domain; that stretch reads NKGVKGVVVG…SDAEVGADAL (116 aa). The B5 domain maps to 409 to 484; it reads VQERTVSVTA…RLYGYDHIPV (76 aa). The Mg(2+) site is built by aspartate 462, aspartate 468, glutamate 471, and glutamate 472. An FDX-ACB domain is found at 712–805; the sequence is PRFPSMTRDM…VEEKFGAELR (94 aa).

This sequence belongs to the phenylalanyl-tRNA synthetase beta subunit family. Type 1 subfamily. In terms of assembly, tetramer of two alpha and two beta subunits. The cofactor is Mg(2+).

It is found in the cytoplasm. It catalyses the reaction tRNA(Phe) + L-phenylalanine + ATP = L-phenylalanyl-tRNA(Phe) + AMP + diphosphate + H(+). The polypeptide is Phenylalanine--tRNA ligase beta subunit (Bacillus cereus (strain ZK / E33L)).